Consider the following 138-residue polypeptide: Probable non-specific lipid-transfer protein 1 (138 aa).

An N-terminal signal peptide occupies residues 1-36 (MRTVSARSSVALVVIVAAVLVWTSSASVAPAPAPGS). 4 cysteine pairs are disulfide-bonded: Cys-40–Cys-88, Cys-50–Cys-65, Cys-66–Cys-111, and Cys-86–Cys-127.

It belongs to the plant LTP family.

In terms of biological role, plant non-specific lipid-transfer proteins transfer phospholipids as well as galactolipids across membranes. May play a role in wax or cutin deposition in the cell walls of expanding epidermal cells and certain secretory tissues. The chain is Probable non-specific lipid-transfer protein 1 from Parietaria judaica (Pellitory-of-the-wall).